Consider the following 427-residue polypeptide: Adenylosuccinate synthetase (427 aa).

Residues 12 to 18 and 40 to 42 each bind GTP; these read GDEGKGK and GHT. The Proton acceptor role is filled by aspartate 13. 2 residues coordinate Mg(2+): aspartate 13 and glycine 40. IMP-binding positions include 13–16, 38–41, threonine 128, arginine 142, glutamine 223, threonine 238, and arginine 302; these read DEGK and NAGH. The active-site Proton donor is histidine 41. Position 298–304 (298–304) interacts with substrate; that stretch reads TVTGRAR. GTP-binding positions include arginine 304, 330–332, and 412–414; these read RLD and SVG.

It belongs to the adenylosuccinate synthetase family. Homodimer. It depends on Mg(2+) as a cofactor.

It localises to the cytoplasm. It catalyses the reaction IMP + L-aspartate + GTP = N(6)-(1,2-dicarboxyethyl)-AMP + GDP + phosphate + 2 H(+). It participates in purine metabolism; AMP biosynthesis via de novo pathway; AMP from IMP: step 1/2. Plays an important role in the de novo pathway of purine nucleotide biosynthesis. Catalyzes the first committed step in the biosynthesis of AMP from IMP. This Brachyspira hyodysenteriae (strain ATCC 49526 / WA1) protein is Adenylosuccinate synthetase.